We begin with the raw amino-acid sequence, 392 residues long: Stilbene synthase 3 (392 aa).

55 to 58 contributes to the substrate binding site; the sequence is KFNR. The active site involves Cys-164. Substrate contacts are provided by residues Leu-267 and 305–307; that span reads GGP.

This sequence belongs to the thiolase-like superfamily. Chalcone/stilbene synthases family. As to quaternary structure, homodimer.

It localises to the cytoplasm. The enzyme catalyses 4-coumaroyl-CoA + 3 malonyl-CoA + 3 H(+) = trans-resveratrol + 4 CO2 + 4 CoA. The protein operates within phytoalexin biosynthesis; 3,4',5-trihydroxystilbene biosynthesis; 3,4',5-trihydroxystilbene from trans-4-coumarate: step 2/2. Functionally, mediates resistance to pathogens which are sensitive to stilbenes. The protein is Stilbene synthase 3 of Vitis vinifera (Grape).